The chain runs to 410 residues: Histidine--tRNA ligase (410 aa).

The protein belongs to the class-II aminoacyl-tRNA synthetase family. As to quaternary structure, homodimer.

The protein resides in the cytoplasm. The catalysed reaction is tRNA(His) + L-histidine + ATP = L-histidyl-tRNA(His) + AMP + diphosphate + H(+). The polypeptide is Histidine--tRNA ligase (Elusimicrobium minutum (strain Pei191)).